Here is a 233-residue protein sequence, read N- to C-terminus: Lactate utilization protein C (233 aa).

It belongs to the LutC/YkgG family.

Functionally, is involved in L-lactate degradation and allows cells to grow with lactate as the sole carbon source. This is Lactate utilization protein C from Oceanobacillus iheyensis (strain DSM 14371 / CIP 107618 / JCM 11309 / KCTC 3954 / HTE831).